Here is a 646-residue protein sequence, read N- to C-terminus: Beta-mannosyltransferase 6 (646 aa).

At 1–25 the chain is on the cytoplasmic side; that stretch reads MGNYKPSIKQYVVTVKAIKSSQFGR. The chain crosses the membrane as a helical span at residues 26-46; that stretch reads LGICAVVLLFVLGYPFYFISN. Residues 47–646 are Extracellular-facing; sequence NPFDTSIRYQ…LTGGWLPSHN (600 aa). 9 N-linked (GlcNAc...) asparagine glycosylation sites follow: Asn-62, Asn-81, Asn-103, Asn-117, Asn-127, Asn-132, Asn-146, Asn-334, and Asn-393.

Belongs to the BMT family.

Its subcellular location is the membrane. Functionally, beta-mannosyltransferase involved in cell wall biosynthesis. Required for beta-1,2-mannose transfer on phospholipomannan. Required for pro-inflammatory response in macrophages through phospholipomannan-induced TNF-alpha production. This chain is Beta-mannosyltransferase 6 (BMT6), found in Candida albicans (strain SC5314 / ATCC MYA-2876) (Yeast).